A 314-amino-acid chain; its full sequence is 2,3-dihydroxyphenylpropionate/2,3-dihydroxicinnamic acid 1,2-dioxygenase (314 aa).

H115 acts as the Proton donor in catalysis. The active-site Proton acceptor is H179.

It belongs to the LigB/MhpB extradiol dioxygenase family. Homotetramer. Fe(2+) is required as a cofactor.

The enzyme catalyses 3-(2,3-dihydroxyphenyl)propanoate + O2 = (2Z,4E)-2-hydroxy-6-oxonona-2,4-dienedioate + H(+). The catalysed reaction is (2E)-3-(2,3-dihydroxyphenyl)prop-2-enoate + O2 = (2Z,4E,7E)-2-hydroxy-6-oxonona-2,4,7-trienedioate + H(+). The protein operates within aromatic compound metabolism; 3-phenylpropanoate degradation. In terms of biological role, catalyzes the non-heme iron(II)-dependent oxidative cleavage of 2,3-dihydroxyphenylpropionic acid and 2,3-dihydroxicinnamic acid into 2-hydroxy-6-ketononadienedioate and 2-hydroxy-6-ketononatrienedioate, respectively. This chain is 2,3-dihydroxyphenylpropionate/2,3-dihydroxicinnamic acid 1,2-dioxygenase, found in Escherichia coli O157:H7.